The following is a 341-amino-acid chain: HTH-type transcriptional repressor PurR (341 aa).

The HTH lacI-type domain maps to 2–56 (ATIKDVAKHAGVSTTTVSHVINKTRFVAENTKAAVWAAIKELHYSPSAVARSLKV). The H-T-H motif DNA-binding region spans 4–23 (IKDVAKHAGVSTTTVSHVIN). The DNA-binding element occupies 48 to 56 (SAVARSLKV). Residues Tyr73, Arg190, Thr192, and Asp275 each coordinate hypoxanthine.

In terms of assembly, homodimer.

Its pathway is purine metabolism; purine nucleotide biosynthesis [regulation]. In terms of biological role, is the main repressor of the genes involved in the de novo synthesis of purine nucleotides, regulating purB, purC, purEK, purF, purHD, purL, purMN and guaBA expression. PurR is allosterically activated to bind its cognate DNA by binding the purine corepressors, hypoxanthine or guanine, thereby effecting transcription repression. This is HTH-type transcriptional repressor PurR from Yersinia pestis bv. Antiqua (strain Antiqua).